Reading from the N-terminus, the 203-residue chain is bMERB domain-containing protein 1 (203 aa).

Residues Leu3–Asp149 enclose the bMERB domain. Positions Val161–Ala184 are disordered.

The protein is bMERB domain-containing protein 1 (Bmerb1) of Mus musculus (Mouse).